Here is a 465-residue protein sequence, read N- to C-terminus: ATP synthase subunit beta (465 aa).

Position 149 to 156 (149 to 156 (GGAGVGKT)) interacts with ATP.

The protein belongs to the ATPase alpha/beta chains family. As to quaternary structure, F-type ATPases have 2 components, CF(1) - the catalytic core - and CF(0) - the membrane proton channel. CF(1) has five subunits: alpha(3), beta(3), gamma(1), delta(1), epsilon(1). CF(0) has three main subunits: a(1), b(2) and c(9-12). The alpha and beta chains form an alternating ring which encloses part of the gamma chain. CF(1) is attached to CF(0) by a central stalk formed by the gamma and epsilon chains, while a peripheral stalk is formed by the delta and b chains.

Its subcellular location is the cell inner membrane. The catalysed reaction is ATP + H2O + 4 H(+)(in) = ADP + phosphate + 5 H(+)(out). Its function is as follows. Produces ATP from ADP in the presence of a proton gradient across the membrane. The catalytic sites are hosted primarily by the beta subunits. The protein is ATP synthase subunit beta of Dictyoglomus thermophilum (strain ATCC 35947 / DSM 3960 / H-6-12).